A 349-amino-acid polypeptide reads, in one-letter code: Bifunctional protein FolKE (349 aa).

Positions 1–226 (MQTTYLSMGS…LFEIDSSKND (226 aa)) are 2-amino-4-hydroxy-6-hydroxymethyldihydropteridine pyrophosphokinase. The interval 226-349 (DSIVLIKDIP…KRMEFLESLL (124 aa)) is GTP cyclohydrolase 1.

The protein in the N-terminal section; belongs to the HPPK family. In the C-terminal section; belongs to the GTP cyclohydrolase I family. In terms of assembly, homomer.

It catalyses the reaction 6-hydroxymethyl-7,8-dihydropterin + ATP = (7,8-dihydropterin-6-yl)methyl diphosphate + AMP + H(+). It carries out the reaction GTP + H2O = 7,8-dihydroneopterin 3'-triphosphate + formate + H(+). It participates in cofactor biosynthesis; 7,8-dihydroneopterin triphosphate biosynthesis; 7,8-dihydroneopterin triphosphate from GTP: step 1/1. The protein operates within cofactor biosynthesis; tetrahydrofolate biosynthesis; 2-amino-4-hydroxy-6-hydroxymethyl-7,8-dihydropteridine diphosphate from 7,8-dihydroneopterin triphosphate: step 4/4. This Lactococcus lactis subsp. cremoris (strain MG1363) protein is Bifunctional protein FolKE (folKE).